The sequence spans 306 residues: Myb family transcription factor MOF1 (306 aa).

The HTH myb-type domain occupies 19-79 (RSKVPRLRWT…HLQMYRCSRL (61 aa)). The segment at residues 50–75 (PKLILQLMGVKGLTISHVKSHLQMYR) is a DNA-binding region (H-T-H motif).

In terms of assembly, interacts with TPR1, TPR2 and TPR3. As to expression, expressed in roots, leaves, leaf sheaths, culms, panicles, lemmas, paleas, lodicules, stamens, and pistils.

Its subcellular location is the nucleus. Its function is as follows. Transcriptional repressor that plays a role in the regulation of organ identity and spikelet meristem determinacy. Interacts with the TPR corepressors to possibly repress the expression of downstream target genes. The polypeptide is Myb family transcription factor MOF1 (Oryza sativa subsp. japonica (Rice)).